Reading from the N-terminus, the 292-residue chain is Protease HtpX homolog (292 aa).

2 helical membrane-spanning segments follow: residues 7–27 (TFILMAALTALVMGMGGLIGG) and 29–49 (GGAVIALAIAGAGNLFAWWNS). A Zn(2+)-binding site is contributed by H131. E132 is an active-site residue. H135 serves as a coordination point for Zn(2+). A run of 2 helical transmembrane segments spans residues 148–168 (ATMAGAIAMLGNMLMFSSMFG) and 178–198 (LAAILAMIFAPMAAGLVQMAI). E203 is a binding site for Zn(2+).

This sequence belongs to the peptidase M48B family. The cofactor is Zn(2+).

It localises to the cell inner membrane. The sequence is that of Protease HtpX homolog from Paracoccus denitrificans (strain Pd 1222).